A 141-amino-acid polypeptide reads, in one-letter code: Large ribosomal subunit protein uL11 (141 aa).

It belongs to the universal ribosomal protein uL11 family. In terms of assembly, part of the ribosomal stalk of the 50S ribosomal subunit. Interacts with L10 and the large rRNA to form the base of the stalk. L10 forms an elongated spine to which L12 dimers bind in a sequential fashion forming a multimeric L10(L12)X complex. In terms of processing, one or more lysine residues are methylated.

Functionally, forms part of the ribosomal stalk which helps the ribosome interact with GTP-bound translation factors. This chain is Large ribosomal subunit protein uL11, found in Streptococcus thermophilus (strain CNRZ 1066).